Consider the following 1142-residue polypeptide: SNF1-activating kinase 1 (1142 aa).

Residues 22–41 (ELEKSGTSSSVSLRSPTKSS) form a disordered region. T43 carries the phosphothreonine modification. Residues 82-93 (QHQQHISSSLAK) show a composition bias toward polar residues. The tract at residues 82–107 (QHQQHISSSLAKTPTTTSSFCSSGSS) is disordered. Positions 94-107 (TPTTTSSFCSSGSS) are enriched in low complexity. In terms of domain architecture, Protein kinase spans 133 to 448 (YEIIKELGHG…IPAIKKHPFV (316 aa)). ATP is bound by residues 139–147 (LGHGQHGKV) and K162. D277 functions as the Proton acceptor in the catalytic mechanism. Disordered regions lie at residues 634–678 (SPEA…VLPQ), 694–799 (NSLL…NSPI), 825–875 (SHFN…AYSE), 919–971 (KSSL…QKGS), 1005–1027 (SQPI…KATT), and 1066–1142 (STNA…SALP). Residues 640 to 656 (SVSSVPNLPSAPSSTRL) show a composition bias toward polar residues. The segment covering 694-706 (NSLLRNSSSHLTS) has biased composition (low complexity). The span at 707–741 (YNSGRPSSRTGRMNSRNQNLPKIPNSLSKISTTKL) shows a compositional bias: polar residues. Positions 742-751 (TELRVPKDSE) are enriched in basic and acidic residues. Polar residues predominate over residues 785 to 799 (NINSSDKSGSKNSPI). Composition is skewed to low complexity over residues 835 to 868 (SSQS…RNSS) and 920 to 936 (SSLN…SSSS). Residues 958–971 (SKLSELSNSPQKGS) show a composition bias toward polar residues. S964 bears the Phosphoserine mark. Over residues 1096-1111 (NDEHARNTSCHGDKGQ) the composition is skewed to basic and acidic residues. Position 1126 is a phosphoserine (S1126). The segment covering 1133–1142 (NEEKRRSALP) has biased composition (basic and acidic residues).

This sequence belongs to the protein kinase superfamily. Ser/Thr protein kinase family. As to quaternary structure, associates with the SNF1 kinase complex. Interacts with SNF1 and REG1. In terms of processing, autophosphorylated.

The protein resides in the cytoplasm. The catalysed reaction is L-seryl-[protein] + ATP = O-phospho-L-seryl-[protein] + ADP + H(+). It carries out the reaction L-threonyl-[protein] + ATP = O-phospho-L-threonyl-[protein] + ADP + H(+). Its function is as follows. Serine/threonine-protein kinase that phosphorylates SNF1, the catalytic subunit of the SNF1 kinase complex. Acts as an activator of the SNF1 kinase complex and controls its nuclear localization upon glucose and nitrogen depletion. Also required for SNF1 kinase activation under other stress conditions like alkaline pH or presence of cadmium. This chain is SNF1-activating kinase 1 (SAK1), found in Saccharomyces cerevisiae (strain ATCC 204508 / S288c) (Baker's yeast).